The chain runs to 189 residues: Lipid A acyltransferase PagP (189 aa).

An N-terminal signal peptide occupies residues 1-23 (MKLKSVLYLLMLLNCLGLKSAHA). Active-site residues include His-61, Asp-104, and Ser-105.

It belongs to the lipid A palmitoyltransferase family. In terms of assembly, homodimer.

It localises to the cell outer membrane. It carries out the reaction a lipid A + a 1,2-diacyl-sn-glycero-3-phosphocholine = a hepta-acyl lipid A + a 2-acyl-sn-glycero-3-phosphocholine. The catalysed reaction is a lipid IVA + a 1,2-diacyl-sn-glycero-3-phosphocholine = a lipid IVB + a 2-acyl-sn-glycero-3-phosphocholine. The enzyme catalyses a lipid IIA + a 1,2-diacyl-sn-glycero-3-phosphocholine = a lipid IIB + a 2-acyl-sn-glycero-3-phosphocholine. Functionally, transfers a fatty acid residue from the sn-1 position of a phospholipid to the N-linked hydroxyfatty acid chain on the proximal unit of lipid A or its precursors. The polypeptide is Lipid A acyltransferase PagP (Erwinia amylovora (strain ATCC 49946 / CCPPB 0273 / Ea273 / 27-3)).